The sequence spans 377 residues: Protein-glutamate methylesterase/protein-glutamine glutaminase 1 (377 aa).

The Response regulatory domain occupies 4 to 121; it reads KVLVVDDSSF…ARNRDEAVTL (118 aa). A 4-aspartylphosphate modification is found at Asp-55. Positions 138–170 are disordered; it reads RPAAPRPAPTTSIAASSSLSQERAAATSPLGNR. Residues 146–157 are compositionally biased toward low complexity; sequence PTTSIAASSSLS. The 194-residue stretch at 184 to 377 folds into the CheB-type methylesterase domain; sequence SGKKYQLTAI…ERMLVEVGLA (194 aa). Active-site residues include Ser-196, His-223, and Asp-319.

The protein belongs to the CheB family. Phosphorylated by CheA. Phosphorylation of the N-terminal regulatory domain activates the methylesterase activity.

It localises to the cytoplasm. The enzyme catalyses [protein]-L-glutamate 5-O-methyl ester + H2O = L-glutamyl-[protein] + methanol + H(+). It catalyses the reaction L-glutaminyl-[protein] + H2O = L-glutamyl-[protein] + NH4(+). Functionally, involved in chemotaxis. Part of a chemotaxis signal transduction system that modulates chemotaxis in response to various stimuli. Catalyzes the demethylation of specific methylglutamate residues introduced into the chemoreceptors (methyl-accepting chemotaxis proteins or MCP) by CheR. Also mediates the irreversible deamidation of specific glutamine residues to glutamic acid. In Vibrio cholerae serotype O1 (strain ATCC 39315 / El Tor Inaba N16961), this protein is Protein-glutamate methylesterase/protein-glutamine glutaminase 1.